Consider the following 315-residue polypeptide: Acetyl-coenzyme A carboxylase carboxyl transferase subunit alpha (315 aa).

One can recognise a CoA carboxyltransferase C-terminal domain in the interval 32 to 289 (EIDMLEASLE…KEAFTKQLSE (258 aa)).

The protein belongs to the AccA family. As to quaternary structure, acetyl-CoA carboxylase is a heterohexamer composed of biotin carboxyl carrier protein (AccB), biotin carboxylase (AccC) and two subunits each of ACCase subunit alpha (AccA) and ACCase subunit beta (AccD).

The protein localises to the cytoplasm. The enzyme catalyses N(6)-carboxybiotinyl-L-lysyl-[protein] + acetyl-CoA = N(6)-biotinyl-L-lysyl-[protein] + malonyl-CoA. The protein operates within lipid metabolism; malonyl-CoA biosynthesis; malonyl-CoA from acetyl-CoA: step 1/1. Its function is as follows. Component of the acetyl coenzyme A carboxylase (ACC) complex. First, biotin carboxylase catalyzes the carboxylation of biotin on its carrier protein (BCCP) and then the CO(2) group is transferred by the carboxyltransferase to acetyl-CoA to form malonyl-CoA. This chain is Acetyl-coenzyme A carboxylase carboxyl transferase subunit alpha, found in Staphylococcus carnosus (strain TM300).